We begin with the raw amino-acid sequence, 178 residues long: Ribosomal RNA small subunit methyltransferase G (178 aa).

S-adenosyl-L-methionine is bound by residues Gly-54, Leu-59, 105–106 (LE), and Arg-120.

This sequence belongs to the methyltransferase superfamily. RNA methyltransferase RsmG family.

It is found in the cytoplasm. The enzyme catalyses guanosine(527) in 16S rRNA + S-adenosyl-L-methionine = N(7)-methylguanosine(527) in 16S rRNA + S-adenosyl-L-homocysteine. In terms of biological role, specifically methylates the N7 position of guanine in position 527 of 16S rRNA. The chain is Ribosomal RNA small subunit methyltransferase G from Helicobacter pylori (strain HPAG1).